The following is a 230-amino-acid chain: RNA-binding riboflavin kinase RibR (230 aa).

This sequence belongs to the RibR family.

It catalyses the reaction riboflavin + ATP = FMN + ADP + H(+). Functionally, may be directly involved in the regulation of the rib genes. C-terminal part of RibR specifically binds to RFN of the rib leader of the riboflavin biosynthetic operon. The RFN element is a sequence within the rib-leader mRNA reported to serve as a receptor for an FMN-dependent riboswitch. Possibly, RibR produces the comodulator FMN through its own N-terminal flavokinase activity. FMN-activated RibR may stabilize the anti-anti terminator structure of RFN mRNA, causing transcription termination of the rib genes in trans. This is RNA-binding riboflavin kinase RibR (ribR) from Bacillus subtilis (strain 168).